The primary structure comprises 465 residues: Exoenzymes regulatory protein AepA (465 aa).

An N-terminal signal peptide occupies residues 1–21; the sequence is MKFNVKMLSVTLGLFTSHAFA.

Belongs to the metallo-dependent hydrolases superfamily.

Its function is as follows. Involved in the control of extracellular enzymes production. Stimulates PEL, PEH, CEL, and PRT production. This is Exoenzymes regulatory protein AepA (aepA) from Pectobacterium carotovorum subsp. carotovorum (Erwinia carotovora subsp. carotovora).